Reading from the N-terminus, the 222-residue chain is Ras-related protein RabT1 (222 aa).

37–44 (GDNKTGKS) lines the GTP pocket. An Effector region motif is present at residues 59-66 (VSSIGVDF). Residues 85-89 (DVNSC) and 145-148 (NKCD) each bind GTP. Cys-219 carries the post-translational modification Cysteine methyl ester. Residue Cys-219 is the site of S-geranylgeranyl cysteine attachment. Positions 220–222 (NIL) are cleaved as a propeptide — removed in mature form.

It belongs to the small GTPase superfamily. Rab family.

It localises to the cell membrane. This Dictyostelium discoideum (Social amoeba) protein is Ras-related protein RabT1 (rabT1).